The primary structure comprises 369 residues: 4-hydroxy-3-methylbut-2-en-1-yl diphosphate synthase (flavodoxin) (369 aa).

[4Fe-4S] cluster is bound by residues Cys-270, Cys-273, Cys-305, and Glu-312.

This sequence belongs to the IspG family. The cofactor is [4Fe-4S] cluster.

It catalyses the reaction (2E)-4-hydroxy-3-methylbut-2-enyl diphosphate + oxidized [flavodoxin] + H2O + 2 H(+) = 2-C-methyl-D-erythritol 2,4-cyclic diphosphate + reduced [flavodoxin]. Its pathway is isoprenoid biosynthesis; isopentenyl diphosphate biosynthesis via DXP pathway; isopentenyl diphosphate from 1-deoxy-D-xylulose 5-phosphate: step 5/6. Functionally, converts 2C-methyl-D-erythritol 2,4-cyclodiphosphate (ME-2,4cPP) into 1-hydroxy-2-methyl-2-(E)-butenyl 4-diphosphate. In Haemophilus ducreyi (strain 35000HP / ATCC 700724), this protein is 4-hydroxy-3-methylbut-2-en-1-yl diphosphate synthase (flavodoxin).